The following is a 266-amino-acid chain: Type 1 encapsulin shell protein (266 aa).

Belongs to the encapsulin family. Family 1 subfamily. Homomultimeric. This encapsulin nanocompartment is formed by 60 subunits, and encloses one Dyp homohexamer; partially assembled 58-subunit compartments with and without cargo are also purified. May assemble the shell from dimers. Monomers form pentamers, which assemble to form hollow shells with pores 5-8 Angstroms in diameter where 3 pentamers meet.

Its subcellular location is the encapsulin nanocompartment. Functionally, shell component of a type 1 encapsulin nanocompartment. Assembles into proteinaceous shells 23-24 nm in diameter with 2-2.5 nm thick walls. Endogenous cargo protein DyP (dye-decolorizing peroxidase) is targeted to the interior via its C-terminal extension; only 1 DyP hexamer is incorporated into each shell. Empty shells can be isolated in the absence of cargo. Cargo encapsulation probably precedes assembly of the nanocompartment; may assemble or disassemble via dimers, subcomplexes with a distinct preference for even numbers of subunits are detected. Nanocompartments are stable against mechanical forces; loaded nanocompartments are less stable than empty ones. Nanocompartments are stable between pH 5-10; they aggregate at pH 9-10 and start to disassemble at pH 11. They are stable in 1M NaCl, 1 M MgCl(2) and 1M CaCl(2), unstable in 20% DMSO (dimethylsulfoxide) and are stable in 20% but not 40% ethanol. This chain is Type 1 encapsulin shell protein, found in Brevibacterium linens.